A 552-amino-acid polypeptide reads, in one-letter code: Steroid transmembrane transporter SLC22A24 (552 aa).

12 helical membrane passes run F16–V36, S146–L166, L178–C200, F204–L226, I234–A254, I260–V280, V350–N370, L380–L400, I407–P427, V435–H455, V474–Y492, and L496–P516.

It belongs to the major facilitator (TC 2.A.1) superfamily. Organic cation transporter (TC 2.A.1.19) family. As to expression, localized to the kidney. Highly specific expression pattern in the nephron, localized to segment 3 of the proximal tubule.

The protein resides in the cell membrane. The catalysed reaction is estrone 3-sulfate(out) + glutarate(in) = estrone 3-sulfate(in) + glutarate(out). It catalyses the reaction 17beta-estradiol 17-O-(beta-D-glucuronate)(out) + glutarate(in) = 17beta-estradiol 17-O-(beta-D-glucuronate)(in) + glutarate(out). The enzyme catalyses taurocholate(out) + glutarate(in) = taurocholate(in) + glutarate(out). It carries out the reaction 5alpha-androstane-3alpha,17beta-diol 3-O-(beta-D-glucuronate)(out) + glutarate(in) = 5alpha-androstane-3alpha,17beta-diol 3-O-(beta-D-glucuronate)(in) + glutarate(out). The catalysed reaction is glycocholate(out) + glutarate(in) = glycocholate(in) + glutarate(out). It catalyses the reaction dehydroepiandrosterone 3-sulfate(out) + glutarate(in) = dehydroepiandrosterone 3-sulfate(in) + glutarate(out). The enzyme catalyses glutarate(in) + succinate(out) = glutarate(out) + succinate(in). Transport is chloride sensitive and transtimulated by glutaric acid. Transport is inhibited by anionic compounds from different chemical classes. Renal transmembrane organic anion/dicarboxylate exchanger that participates in the reabsorption of conjugated steroids including estradiol-17beta-D-glucuronide (or 17beta-estradiol 17-O-(beta-D-glucuronate)), androstanediol glucuronide (or 5alpha-androstane-3alpha,17beta-diol 3-O-(beta-D-glucuronate)), and estrone 3-sulfate, as well as bile acids taurocholate and glycocholate, driven by an outward gradient of dicarboxylates such as glutarate or succinate. Functionally, similar uptake function as Isoform 1. Its function is as follows. Lack of transporter activity. The chain is Steroid transmembrane transporter SLC22A24 from Homo sapiens (Human).